The sequence spans 325 residues: Aldo-keto reductase family 1 member A1 (325 aa).

Alanine 2 carries the post-translational modification N-acetylalanine. At serine 4 the chain carries Phosphoserine. Residues glycine 11–glycine 20, threonine 21, and tryptophan 22 each bind NADP(+). The residue at position 38 (serine 38) is a Phosphoserine. Aspartate 45 lines the NADP(+) pocket. Tyrosine 50 functions as the Proton donor in the catalytic mechanism. Lysine 127 bears the N6-acetyllysine; alternate mark. Position 127 is an N6-succinyllysine; alternate (lysine 127). Positions 162, 163, 211, 213, 215, 216, 263, 264, 265, 266, 269, and 273 each coordinate NADP(+). Position 211 is a phosphoserine (serine 211).

This sequence belongs to the aldo/keto reductase family. In terms of assembly, monomer.

Its subcellular location is the cytoplasm. It localises to the cytosol. It is found in the apical cell membrane. It catalyses the reaction a primary alcohol + NADP(+) = an aldehyde + NADPH + H(+). The enzyme catalyses L-gulonate + NADP(+) = aldehydo-D-glucuronate + NADPH + H(+). It carries out the reaction L-gulono-1,4-lactone + NADP(+) = D-glucurono-3,6-lactone + NADPH + H(+). The catalysed reaction is allyl alcohol + NADP(+) = acrolein + NADPH + H(+). It catalyses the reaction glycerol + NADP(+) = D-glyceraldehyde + NADPH + H(+). The enzyme catalyses glycerol + NADP(+) = L-glyceraldehyde + NADPH + H(+). It carries out the reaction hydroxyacetone + NADP(+) = methylglyoxal + NADPH + H(+). The catalysed reaction is 3-deoxyfructose + NADP(+) = 3-deoxyglucosone + NADPH + H(+). It catalyses the reaction (R)-mevalonate + NADP(+) = (R)-mevaldate + NADPH + H(+). The enzyme catalyses pyridine 3-methanol + NADP(+) = pyridine-3-carbaldehyde + NADPH + H(+). It carries out the reaction S-nitroso-CoA + NADPH + H(+) = sulfinamide-CoA + NADP(+). The catalysed reaction is S-nitrosoglutathione + NADPH + H(+) = S-(hydroxysulfenamide)glutathione + NADP(+). Its function is as follows. Catalyzes the NADPH-dependent reduction of a wide variety of carbonyl-containing compounds to their corresponding alcohols. Displays enzymatic activity towards endogenous metabolites such as aromatic and aliphatic aldehydes, ketones, monosaccharides and bile acids, with a preference for negatively charged substrates, such as glucuronate and succinic semialdehyde. Plays an important role in ascorbic acid biosynthesis by catalyzing the reduction of D-glucuronic acid and D-glucurono-gamma-lactone. Functions as a detoxifiying enzyme by reducing a range of toxic aldehydes. Reduces methylglyoxal and 3-deoxyglucosone, which are present at elevated levels under hyperglycemic conditions and are cytotoxic. Involved also in the detoxification of lipid-derived aldehydes like acrolein. Plays a role in the activation of procarcinogens, such as polycyclic aromatic hydrocarbon trans-dihydrodiols, and in the metabolism of various xenobiotics and drugs. Also acts as an inhibitor of protein S-nitrosylation by mediating degradation of S-nitroso-coenzyme A (S-nitroso-CoA), a cofactor required to S-nitrosylate proteins. S-nitroso-CoA reductase activity is involved in reprogramming intermediary metabolism in renal proximal tubules, notably by inhibiting protein S-nitrosylation of isoform 2 of PKM (PKM2). Also acts as a S-nitroso-glutathione reductase by catalyzing the NADPH-dependent reduction of S-nitrosoglutathione. Displays no reductase activity towards retinoids. This Bos taurus (Bovine) protein is Aldo-keto reductase family 1 member A1.